The sequence spans 593 residues: Methionine--tRNA ligase (593 aa).

The 'HIGH' region motif lies at 7 to 17 (PYANGPRHIGH). Residues Cys139, Cys142, Cys152, and Cys155 each contribute to the Zn(2+) site. Positions 343–347 (KFSTS) match the 'KMSKS' region motif. Thr346 lines the ATP pocket.

The protein belongs to the class-I aminoacyl-tRNA synthetase family. MetG type 1 subfamily. Monomer. Zn(2+) serves as cofactor.

It is found in the cytoplasm. The enzyme catalyses tRNA(Met) + L-methionine + ATP = L-methionyl-tRNA(Met) + AMP + diphosphate. In terms of biological role, is required not only for elongation of protein synthesis but also for the initiation of all mRNA translation through initiator tRNA(fMet) aminoacylation. The sequence is that of Methionine--tRNA ligase from Saccharopolyspora erythraea (strain ATCC 11635 / DSM 40517 / JCM 4748 / NBRC 13426 / NCIMB 8594 / NRRL 2338).